The chain runs to 245 residues: tRNA pseudouridine synthase A (245 aa).

Aspartate 52 (nucleophile) is an active-site residue. Residue tyrosine 111 participates in substrate binding.

Belongs to the tRNA pseudouridine synthase TruA family. As to quaternary structure, homodimer.

It carries out the reaction uridine(38/39/40) in tRNA = pseudouridine(38/39/40) in tRNA. Its function is as follows. Formation of pseudouridine at positions 38, 39 and 40 in the anticodon stem and loop of transfer RNAs. The polypeptide is tRNA pseudouridine synthase A (Ehrlichia canis (strain Jake)).